A 101-amino-acid chain; its full sequence is Carboxysome shell vertex protein CcmL (101 aa).

The BMV domain occupies 1–84 (MQIAKVRGTV…VDAAVVAIID (84 aa)).

The protein belongs to the CcmL/EutN family. CcmL subfamily. As to quaternary structure, homopentamer. Interacts with full-length CcmM.

The protein resides in the carboxysome. Functionally, probably forms vertices in the carboxysome, a polyhedral inclusion where RuBisCO (ribulose bisphosphate carboxylase, rbcL-rbcS) is sequestered. Has been modeled to induce curvature upon insertion into an otherwise flat hexagonal molecular layer of CcmK subunits. The sequence is that of Carboxysome shell vertex protein CcmL from Nostoc sp. (strain PCC 7120 / SAG 25.82 / UTEX 2576).